Consider the following 318-residue polypeptide: Cytochrome c biogenesis protein CcsA (318 aa).

The next 8 helical transmembrane spans lie at 17–37 (VLAL…ISFW), 45–65 (SAVV…QLVL), 75–95 (ISNL…AQLL), 104–124 (IVSA…SFAL), 149–169 (VIMC…AVLF), 224–244 (TITV…VWAN), 258–275 (TWAL…HTRF), and 287–307 (VAVA…LLGI).

Belongs to the CcmF/CycK/Ccl1/NrfE/CcsA family. In terms of assembly, may interact with ccs1.

The protein resides in the cellular thylakoid membrane. Its function is as follows. Required during biogenesis of c-type cytochromes (cytochrome c6 and cytochrome f) at the step of heme attachment. In Prochlorococcus marinus (strain MIT 9303), this protein is Cytochrome c biogenesis protein CcsA.